The following is a 175-amino-acid chain: MESRYLQKCLGTCLTQGLTEVARVRPLDPIEYLAFWLYKHKENMNMEQMRQREMITLEHERELAMMEQEMLERLKAEELLFQQQLAFQLELEMQQKEKQKSEDFETGQEKSFKSMMSMESTARGEEQEPMQAEELVMDSGKTLAEISDRYGAPNLSRVEELDEPMLSDNGVSAPP.

Positions 94–112 (QQKEKQKSEDFETGQEKSF) are enriched in basic and acidic residues. Disordered regions lie at residues 94-134 (QQKE…QAEE) and 152-175 (APNLSRVEELDEPMLSDNGVSAPP).

The protein belongs to the dpy-30 family. In terms of assembly, component of the axonemal radial spoke complex 1 (RS1), at least composed of spoke head proteins RSPH1, RSPH3, RSPH9 and the cilia-specific component RSPH4A or sperm-specific component RSPH6A, spoke stalk proteins RSPH14, DNAJB13, DYDC1, ROPN1L and NME5, and the anchor protein IQUB. Interacts with SH3GL3.

The protein localises to the cytoplasm. The protein resides in the cytoskeleton. It localises to the flagellum axoneme. In terms of biological role, functions as part of axonemal radial spoke complexes that play an important part in the motility of sperm and cilia. Plays a crucial role during acrosome biogenesis. In Mus musculus (Mouse), this protein is DPY30 domain-containing protein 1 (Dydc1).